The primary structure comprises 110 residues: Large ribosomal subunit protein uL22 (110 aa).

It belongs to the universal ribosomal protein uL22 family. As to quaternary structure, part of the 50S ribosomal subunit.

Functionally, this protein binds specifically to 23S rRNA; its binding is stimulated by other ribosomal proteins, e.g. L4, L17, and L20. It is important during the early stages of 50S assembly. It makes multiple contacts with different domains of the 23S rRNA in the assembled 50S subunit and ribosome. Its function is as follows. The globular domain of the protein is located near the polypeptide exit tunnel on the outside of the subunit, while an extended beta-hairpin is found that lines the wall of the exit tunnel in the center of the 70S ribosome. The protein is Large ribosomal subunit protein uL22 of Paraburkholderia phytofirmans (strain DSM 17436 / LMG 22146 / PsJN) (Burkholderia phytofirmans).